The following is a 325-amino-acid chain: Elongation factor P--(R)-beta-lysine ligase (325 aa).

Substrate is bound at residue 76-78; it reads SPE. ATP-binding positions include 100 to 102 and asparagine 109; that span reads RNE. Tyrosine 118 is a substrate binding site. Position 244 to 245 (244 to 245) interacts with ATP; sequence EL. Residue glutamate 251 coordinates substrate. Glycine 300 contacts ATP.

The protein belongs to the class-II aminoacyl-tRNA synthetase family. EpmA subfamily. In terms of assembly, homodimer.

It carries out the reaction D-beta-lysine + L-lysyl-[protein] + ATP = N(6)-((3R)-3,6-diaminohexanoyl)-L-lysyl-[protein] + AMP + diphosphate + H(+). Its function is as follows. With EpmB is involved in the beta-lysylation step of the post-translational modification of translation elongation factor P (EF-P). Catalyzes the ATP-dependent activation of (R)-beta-lysine produced by EpmB, forming a lysyl-adenylate, from which the beta-lysyl moiety is then transferred to the epsilon-amino group of a conserved specific lysine residue in EF-P. The sequence is that of Elongation factor P--(R)-beta-lysine ligase from Edwardsiella ictaluri (strain 93-146).